The sequence spans 654 residues: Protein SERAC1 (654 aa).

The chain crosses the membrane as a helical span at residues Asn-32–Ala-54.

It belongs to the SERAC1 family. As to expression, widely expressed, with predominant expression in skeletal muscle and brain. In the brain, highest levels are found in the frontal and occipital cortices, cerebellum and hippocampus.

It localises to the mitochondrion membrane. Its subcellular location is the endoplasmic reticulum. The protein resides in the mitochondrion. Facilitates the transport of serine from the cytosol to the mitochondria by interacting with and stabilizing Sideroflexin-1 (SFXN1), a mitochondrial serine transporter, playing a fundamental role in the one-carbon cycle responsible for the synthesis of nucleotides needed for mitochondrial DNA replication. Plays an important role in the phosphatidylglycerol (PG) remodeling that is essential for both mitochondrial function and intracellular cholesterol trafficking. Specifically involved in the exchange of the sn-1 acyl chain from PG 16:0/18:1(9Z) (also known as 1-hexadecanoyl-2-(9Z-octadecenoyl)-sn-glycero-3-phospho-(1'-sn-glycerol)) to PG 18:0/18:1(9Z) (also known as 1-octadecanoyl-2-(9Z-octadecenoyl)-sn-glycero-3-phospho-(1'-sn-glycerol)), a step needed in the bis(monoacylglycerol)phosphate biosynthetic pathway. May have acyltransferase activity although the mechanism for PG remodeling has not been determined. This is Protein SERAC1 (SERAC1) from Homo sapiens (Human).